Reading from the N-terminus, the 101-residue chain is Small ribosomal subunit protein uS14 (101 aa).

This sequence belongs to the universal ribosomal protein uS14 family. In terms of assembly, part of the 30S ribosomal subunit. Contacts proteins S3 and S10.

Its function is as follows. Binds 16S rRNA, required for the assembly of 30S particles and may also be responsible for determining the conformation of the 16S rRNA at the A site. The sequence is that of Small ribosomal subunit protein uS14 from Polynucleobacter necessarius subsp. necessarius (strain STIR1).